A 224-amino-acid chain; its full sequence is uncharacterized protein (224 aa).

This is an uncharacterized protein from Acanthamoeba polyphaga mimivirus (APMV).